Consider the following 174-residue polypeptide: Small ribosomal subunit protein bS16 (174 aa).

A disordered region spans residues 81–174 (QRFTGEPAPP…DATTDATPSA (94 aa)). Residues 87–97 (PAPPPMKTAPP) show a composition bias toward pro residues. Residues 98–118 (KPDKKALFEAAAKEAAGEPRA) are compositionally biased toward basic and acidic residues. Low complexity predominate over residues 135-158 (ETTPAAEAAPDAAASADEPAGGAS). Over residues 160-174 (AAESQDATTDATPSA) the composition is skewed to polar residues.

This sequence belongs to the bacterial ribosomal protein bS16 family.

This chain is Small ribosomal subunit protein bS16, found in Acidothermus cellulolyticus (strain ATCC 43068 / DSM 8971 / 11B).